Reading from the N-terminus, the 73-residue chain is Cell division protein ZapB (73 aa).

The stretch at 3–66 forms a coiled coil; the sequence is LELLSKLETK…SWNEKVTGLV (64 aa).

This sequence belongs to the ZapB family. As to quaternary structure, homodimer. The ends of the coiled-coil dimer bind to each other, forming polymers. Interacts with FtsZ.

It is found in the cytoplasm. Its function is as follows. Non-essential, abundant cell division factor that is required for proper Z-ring formation. It is recruited early to the divisome by direct interaction with FtsZ, stimulating Z-ring assembly and thereby promoting cell division earlier in the cell cycle. Its recruitment to the Z-ring requires functional FtsA or ZipA. The chain is Cell division protein ZapB from Shewanella baltica (strain OS223).